Consider the following 868-residue polypeptide: Hopanoid transporter HpnN (868 aa).

Transmembrane regions (helical) follow at residues 16-36, 273-293, 298-318, 326-346, 370-390, 403-423, 452-472, 710-730, 740-760, 762-782, 805-825, and 834-854; these read FAAF…FYTY, GAVV…WMAL, IIFA…AVGL, LLSI…GIQF, YSAV…LSFL, IAGA…PALL, IAII…LYFM, IVAS…ILLW, ALTL…CVLI, LPLN…GVAF, AIFF…LSSH, and LLAL…PALM. Positions 299 to 425 constitute an SSD domain; it reads IFAVAANLVI…ITVLPALLKL (127 aa).

It belongs to the resistance-nodulation-cell division (RND) (TC 2.A.6) family. MmpL subfamily.

The protein localises to the cell inner membrane. Functionally, essential for hopanoid transport from the cytoplasmic to the outer membrane. Required for the C(35) hopanoid, bacteriohopanetetrol, to remain localized to the mother cell type. The protein is Hopanoid transporter HpnN of Rhodopseudomonas palustris (strain TIE-1).